Consider the following 62-residue polypeptide: Sperm protamine P1 (62 aa).

The tract at residues 1–62 (MARYRHSRSR…RYSRRRRRRY (62 aa)) is disordered.

Belongs to the protamine P1 family. In terms of tissue distribution, testis.

It localises to the nucleus. The protein resides in the chromosome. Protamines substitute for histones in the chromatin of sperm during the haploid phase of spermatogenesis. They compact sperm DNA into a highly condensed, stable and inactive complex. The chain is Sperm protamine P1 (PRM1) from Notamacropus eugenii (Tammar wallaby).